A 381-amino-acid polypeptide reads, in one-letter code: tRNA pseudouridine synthase Pus10 (381 aa).

The active-site Nucleophile is the aspartate 226.

The protein belongs to the pseudouridine synthase Pus10 family.

It carries out the reaction uridine(54) in tRNA = pseudouridine(54) in tRNA. It catalyses the reaction uridine(55) in tRNA = pseudouridine(55) in tRNA. Functionally, responsible for synthesis of pseudouridine from uracil-54 and uracil-55 in the psi GC loop of transfer RNAs. This Nitrosopumilus maritimus (strain SCM1) protein is tRNA pseudouridine synthase Pus10.